A 309-amino-acid chain; its full sequence is Ribose-phosphate pyrophosphokinase (309 aa).

Residues 37-39 and 96-97 contribute to the ATP site; these read DGE and RQ. Mg(2+) contacts are provided by His130 and Asp169. Lys192 is a catalytic residue. Residues Arg194, Asp218, and 222-226 each bind D-ribose 5-phosphate; that span reads DTAGT.

Belongs to the ribose-phosphate pyrophosphokinase family. Class I subfamily. In terms of assembly, homohexamer. Mg(2+) serves as cofactor.

The protein resides in the cytoplasm. It catalyses the reaction D-ribose 5-phosphate + ATP = 5-phospho-alpha-D-ribose 1-diphosphate + AMP + H(+). The protein operates within metabolic intermediate biosynthesis; 5-phospho-alpha-D-ribose 1-diphosphate biosynthesis; 5-phospho-alpha-D-ribose 1-diphosphate from D-ribose 5-phosphate (route I): step 1/1. In terms of biological role, involved in the biosynthesis of the central metabolite phospho-alpha-D-ribosyl-1-pyrophosphate (PRPP) via the transfer of pyrophosphoryl group from ATP to 1-hydroxyl of ribose-5-phosphate (Rib-5-P). This chain is Ribose-phosphate pyrophosphokinase, found in Campylobacter jejuni subsp. jejuni serotype O:2 (strain ATCC 700819 / NCTC 11168).